The sequence spans 1031 residues: GTPase-activating protein DDB_G0291510 (1031 aa).

Residues 18-48 are disordered; sequence VEKGDIDENNSGSINNRPLSPTLFSSNSSNN. Polar residues predominate over residues 26–41; it reads NNSGSINNRPLSPTLF. The Rap-GAP domain maps to 186–404; it reads FKDLEQTQTE…RTFKDQLESI (219 aa). Residues 471–881 enclose the CNH domain; it reads NEKINCLDVV…LSNDDCNLDN (411 aa). The disordered stretch occupies residues 920–950; sequence NNNYNNNGNNSNGGNNNNNNNNNNGCNNSLI.

The chain is GTPase-activating protein DDB_G0291510 from Dictyostelium discoideum (Social amoeba).